The primary structure comprises 557 residues: Vacuolar protein sorting-associated protein 30 (557 aa).

Disordered stretches follow at residues 93 to 149 (DDDN…ENQQ) and 218 to 238 (NKEI…SEKE). Over residues 135-147 (DEEEQEATDEDEN) the composition is skewed to acidic residues. Position 142 is a phosphothreonine (Thr-142). Residues 189 to 322 (LINRLKSEYD…QLDKLRKINI (134 aa)) are a coiled coil. The tract at residues 320–539 (INIFNATFKI…LAFSSNLLSK (220 aa)) is BARA. The segment at 515–540 (WTTAMKFLLTNVKWLLAFSSNLLSKS) is required for membrane-association, autophagic function during starvation and normal autophagosome morphology.

It belongs to the beclin family. In terms of assembly, component of the autophagy-specific VPS34 PI3-kinase complex I composed of VPS15, VPS30, VPS34, ATG14 and ATG38; and of the VPS34 PI3-kinase complex II composed of VPS15, VPS30, VPS34 and VPS38.

The protein localises to the endosome membrane. The protein resides in the vacuole membrane. It localises to the preautophagosomal structure membrane. Functionally, required for cytoplasm to vacuole transport (Cvt), autophagy, nucleophagy, and mitophagy, as a part of the autophagy-specific VPS34 PI3-kinase complex I. This complex is essential to recruit the ATG8-phosphatidylinositol conjugate and the ATG12-ATG5 conjugate to the pre-autophagosomal structure. Also involved in endosome-to-Golgi retrograde transport as part of the VPS34 PI3-kinase complex II. This second complex is required for the endosome-to-Golgi retrieval of PEP1 and KEX2, and the recruitment of VPS5 and VPS7, two components of the retromer complex, to endosomal membranes (probably through the synthesis of a specific pool of phosphatidylinositol 3-phosphate recruiting the retromer to the endosomes). Also plays a role in regulation of filamentous growth. This Saccharomyces cerevisiae (strain ATCC 204508 / S288c) (Baker's yeast) protein is Vacuolar protein sorting-associated protein 30.